A 132-amino-acid chain; its full sequence is Agouti-signaling protein (132 aa).

Residues 1–22 (MDVTRLLLATLLVFLCFFTAYS) form the signal peptide. The N-linked (GlcNAc...) asparagine glycan is linked to Asn39. The segment at 58-88 (KSKQMSRKEAEKKRSSKKEASMKKVARPRTP) is disordered. Over residues 63–79 (SRKEAEKKRSSKKEASM) the composition is skewed to basic and acidic residues. Intrachain disulfides connect Cys93/Cys108, Cys100/Cys114, Cys107/Cys125, Cys111/Cys132, and Cys116/Cys123. The region spanning 93 to 132 (CVATRDSCKPPAPACCDPCASCQCRFFRSACSCRVLSLNC) is the Agouti domain.

The protein resides in the secreted. Functionally, involved in the regulation of melanogenesis. The binding of ASP to MC1R precludes alpha-MSH initiated signaling and thus blocks production of cAMP, leading to a down-regulation of eumelanogenesis (brown/black pigment) and thus increasing synthesis of pheomelanin (yellow/red pigment). In Cercopithecus mitis (Blue monkey), this protein is Agouti-signaling protein (ASIP).